The primary structure comprises 63 residues: Large ribosomal subunit protein uL29 (63 aa).

This sequence belongs to the universal ribosomal protein uL29 family.

The sequence is that of Large ribosomal subunit protein uL29 from Marinomonas sp. (strain MWYL1).